We begin with the raw amino-acid sequence, 485 residues long: 3-isopropylmalate dehydratase large subunit (485 aa).

2 disordered regions span residues 1–20 and 73–92; these read MSDASSTAPSQAGATSQSTG and PERTIATPDHNVPTSDRSLP. 3 residues coordinate [4Fe-4S] cluster: C364, C424, and C427.

It belongs to the aconitase/IPM isomerase family. LeuC type 1 subfamily. In terms of assembly, heterodimer of LeuC and LeuD. [4Fe-4S] cluster serves as cofactor.

The enzyme catalyses (2R,3S)-3-isopropylmalate = (2S)-2-isopropylmalate. Its pathway is amino-acid biosynthesis; L-leucine biosynthesis; L-leucine from 3-methyl-2-oxobutanoate: step 2/4. Catalyzes the isomerization between 2-isopropylmalate and 3-isopropylmalate, via the formation of 2-isopropylmaleate. This is 3-isopropylmalate dehydratase large subunit from Rhodopirellula baltica (strain DSM 10527 / NCIMB 13988 / SH1).